The chain runs to 241 residues: Small ribosomal subunit protein uS2 (241 aa).

This sequence belongs to the universal ribosomal protein uS2 family.

In Hamiltonella defensa subsp. Acyrthosiphon pisum (strain 5AT), this protein is Small ribosomal subunit protein uS2.